Reading from the N-terminus, the 117-residue chain is Large ribosomal subunit protein uL18 (117 aa).

This sequence belongs to the universal ribosomal protein uL18 family. Part of the 50S ribosomal subunit; part of the 5S rRNA/L5/L18/L25 subcomplex. Contacts the 5S and 23S rRNAs.

This is one of the proteins that bind and probably mediate the attachment of the 5S RNA into the large ribosomal subunit, where it forms part of the central protuberance. This is Large ribosomal subunit protein uL18 from Onion yellows phytoplasma (strain OY-M).